The sequence spans 21 residues: uncharacterized protein (21 aa).

This is an uncharacterized protein from Haemophilus influenzae (strain ATCC 51907 / DSM 11121 / KW20 / Rd).